We begin with the raw amino-acid sequence, 582 residues long: Hydrogen peroxide stress regulator 1 (582 aa).

4 disordered regions span residues 24 to 55 (SPFA…HNSS), 107 to 154 (YPSA…GISK), 347 to 366 (TSYN…SGET), and 375 to 422 (NTSG…GGKS). Over residues 107–125 (YPSASFSTSQHPSQVYNDG) the composition is skewed to polar residues. Over residues 126-143 (STLNSNNTTQQLNNNNGF) the composition is skewed to low complexity. Over residues 375-392 (NTSGRSPNSMEATEQIGT) the composition is skewed to polar residues. The segment at 423–446 (FVCPECSKKFKRSEHLRRHIRSLH) adopts a C2H2-type 1 zinc-finger fold. The C2H2-type 2; atypical zinc finger occupies 452 to 473 (FVCICGKRFSRRDNLRQHERLH).

It is found in the nucleus. In terms of biological role, transcription factor that globally supports gene expression in response to hydrogen peroxide. The sequence is that of Hydrogen peroxide stress regulator 1 (hsr1) from Schizosaccharomyces pombe (strain 972 / ATCC 24843) (Fission yeast).